The following is a 343-amino-acid chain: MKVLGIETSCDETGVAIYDGSVRRLLGHCLHSQIDLHAAYGGVVPELASRDHIRRLPLLLKQLFGETGLSRRDIDAVAYTAGPGLAGALLTGASFAEAFALAAGVPALPIHHLEGHLLSPLLADDAPRFPFVALLVSGGHTQLMHVAGVGRYELLGESLDDAAGEAFDKTAKLLGLGYPGGPQLSALAAQGCAGRFKLPRPMLHSGDFDFSFSGLKTAVLNRVSSDDWEPGLAADLAADFQEAVVEVLCAKALAALKHTGLDTLVVAGGVGANRRLRERLDNLAARRRYRVCYPEPALCTDNGAMIAFAGALRLEAGERRAAAPAVRVRPRWPLVELDAPGCP.

Fe cation-binding residues include His-112 and His-116. Residues 135–139 (LVSGG), Asp-168, Gly-181, and Asn-273 each bind substrate. Asp-301 is a binding site for Fe cation.

This sequence belongs to the KAE1 / TsaD family. Requires Fe(2+) as cofactor.

The protein resides in the cytoplasm. The enzyme catalyses L-threonylcarbamoyladenylate + adenosine(37) in tRNA = N(6)-L-threonylcarbamoyladenosine(37) in tRNA + AMP + H(+). Its function is as follows. Required for the formation of a threonylcarbamoyl group on adenosine at position 37 (t(6)A37) in tRNAs that read codons beginning with adenine. Is involved in the transfer of the threonylcarbamoyl moiety of threonylcarbamoyl-AMP (TC-AMP) to the N6 group of A37, together with TsaE and TsaB. TsaD likely plays a direct catalytic role in this reaction. The polypeptide is tRNA N6-adenosine threonylcarbamoyltransferase (Azoarcus sp. (strain BH72)).